The primary structure comprises 354 residues: Ferrochelatase (354 aa).

Residues His-204 and Glu-306 each coordinate Fe cation.

This sequence belongs to the ferrochelatase family.

It localises to the cytoplasm. It catalyses the reaction heme b + 2 H(+) = protoporphyrin IX + Fe(2+). Its pathway is porphyrin-containing compound metabolism; protoheme biosynthesis; protoheme from protoporphyrin-IX: step 1/1. Functionally, catalyzes the ferrous insertion into protoporphyrin IX. The polypeptide is Ferrochelatase (Coxiella burnetii (strain Dugway 5J108-111)).